Reading from the N-terminus, the 382-residue chain is Cytochrome b (382 aa).

Transmembrane regions (helical) follow at residues 33–53 (FGSLLGLCLASQIVTGLFLAM), 77–98 (WLVRNMHANGASFFFICLYTHI), 113–133 (WTVGVILLLLTMMTAFVGYVL), and 178–198 (FFAFHFLLPFVIAAFTAIHLL). H83 and H97 together coordinate heme b. Positions 182 and 196 each coordinate heme b. An a ubiquinone-binding site is contributed by H201. Helical transmembrane passes span 226-246 (LKDLLGFTILILTLTSVALLT), 288-308 (LGGVLALLASVLILATVPFLQ), 320-340 (LTQLVFWTLIANIAILTWIGG), and 347-367 (FVSIGQLASLAYFSIFLIIIP).

This sequence belongs to the cytochrome b family. As to quaternary structure, the cytochrome bc1 complex contains 3 respiratory subunits (MT-CYB, CYC1 and UQCRFS1), 2 core proteins (UQCRC1 and UQCRC2) and probably 6 low-molecular weight proteins. Heme b is required as a cofactor.

The protein localises to the mitochondrion inner membrane. Component of the ubiquinol-cytochrome c reductase complex (complex III or cytochrome b-c1 complex) that is part of the mitochondrial respiratory chain. The b-c1 complex mediates electron transfer from ubiquinol to cytochrome c. Contributes to the generation of a proton gradient across the mitochondrial membrane that is then used for ATP synthesis. In Sigmops gracilis (Slender fangjaw), this protein is Cytochrome b (mt-cyb).